Reading from the N-terminus, the 118-residue chain is Putative pterin-4-alpha-carbinolamine dehydratase (118 aa).

It belongs to the pterin-4-alpha-carbinolamine dehydratase family.

It carries out the reaction (4aS,6R)-4a-hydroxy-L-erythro-5,6,7,8-tetrahydrobiopterin = (6R)-L-erythro-6,7-dihydrobiopterin + H2O. This Xanthomonas euvesicatoria pv. vesicatoria (strain 85-10) (Xanthomonas campestris pv. vesicatoria) protein is Putative pterin-4-alpha-carbinolamine dehydratase.